The primary structure comprises 273 residues: 3-methyl-2-oxobutanoate hydroxymethyltransferase (273 aa).

Mg(2+) is bound by residues aspartate 53 and aspartate 92. 3-methyl-2-oxobutanoate contacts are provided by residues aspartate 53–serine 54, aspartate 92, and lysine 120. Glutamate 122 is a Mg(2+) binding site. Residue glutamate 189 is the Proton acceptor of the active site.

This sequence belongs to the PanB family. Homodecamer; pentamer of dimers. Mg(2+) serves as cofactor.

It localises to the cytoplasm. The enzyme catalyses 3-methyl-2-oxobutanoate + (6R)-5,10-methylene-5,6,7,8-tetrahydrofolate + H2O = 2-dehydropantoate + (6S)-5,6,7,8-tetrahydrofolate. Its pathway is cofactor biosynthesis; (R)-pantothenate biosynthesis; (R)-pantoate from 3-methyl-2-oxobutanoate: step 1/2. Catalyzes the reversible reaction in which hydroxymethyl group from 5,10-methylenetetrahydrofolate is transferred onto alpha-ketoisovalerate to form ketopantoate. In Cupriavidus necator (strain ATCC 17699 / DSM 428 / KCTC 22496 / NCIMB 10442 / H16 / Stanier 337) (Ralstonia eutropha), this protein is 3-methyl-2-oxobutanoate hydroxymethyltransferase.